Consider the following 334-residue polypeptide: Mitochondrial glycine transporter (334 aa).

Solcar repeat units follow at residues 10–94 (SKSS…IRQA), 127–211 (LSNT…FKRR), and 234–318 (RAAA…LIMR). 6 consecutive transmembrane segments (helical) span residues 16–41 (FVAG…TRVQ), 69–95 (GTVP…RQAA), 133–158 (LLAG…VRYE), 186–209 (GFGA…EQFK), 238–264 (VNFS…KTRI), and 293–311 (GLGL…AWTL).

Belongs to the mitochondrial carrier (TC 2.A.29) family. SLC25A38 subfamily.

The protein localises to the mitochondrion inner membrane. It carries out the reaction glycine(in) = glycine(out). Mitochondrial glycine transporter that imports glycine into the mitochondrial matrix. Plays an important role in providing glycine for the first enzymatic step in heme biosynthesis, the condensation of glycine with succinyl-CoA to produce 5-aminolevulinate (ALA) in the mitochondrial matrix. The protein is Mitochondrial glycine transporter of Pyricularia oryzae (strain 70-15 / ATCC MYA-4617 / FGSC 8958) (Rice blast fungus).